The following is a 124-amino-acid chain: Small ribosomal subunit protein uS12 (124 aa).

Position 90 is a 3-methylthioaspartic acid (Asp-90).

Belongs to the universal ribosomal protein uS12 family. As to quaternary structure, part of the 30S ribosomal subunit. Contacts proteins S8 and S17. May interact with IF1 in the 30S initiation complex.

In terms of biological role, with S4 and S5 plays an important role in translational accuracy. Interacts with and stabilizes bases of the 16S rRNA that are involved in tRNA selection in the A site and with the mRNA backbone. Located at the interface of the 30S and 50S subunits, it traverses the body of the 30S subunit contacting proteins on the other side and probably holding the rRNA structure together. The combined cluster of proteins S8, S12 and S17 appears to hold together the shoulder and platform of the 30S subunit. This Wolbachia pipientis wMel protein is Small ribosomal subunit protein uS12.